The sequence spans 209 residues: Orotate phosphoribosyltransferase (209 aa).

5-phospho-alpha-D-ribose 1-diphosphate contacts are provided by residues R96, K100, H102, and 122–130 (EDLISTGGS). Position 126 (S126) interacts with orotate.

This sequence belongs to the purine/pyrimidine phosphoribosyltransferase family. PyrE subfamily. In terms of assembly, homodimer. It depends on Mg(2+) as a cofactor.

The enzyme catalyses orotidine 5'-phosphate + diphosphate = orotate + 5-phospho-alpha-D-ribose 1-diphosphate. It participates in pyrimidine metabolism; UMP biosynthesis via de novo pathway; UMP from orotate: step 1/2. In terms of biological role, catalyzes the transfer of a ribosyl phosphate group from 5-phosphoribose 1-diphosphate to orotate, leading to the formation of orotidine monophosphate (OMP). The chain is Orotate phosphoribosyltransferase from Listeria monocytogenes serotype 4b (strain F2365).